The chain runs to 370 residues: Chloromuconate cycloisomerase (370 aa).

Lys-165 serves as the catalytic Proton acceptor. The Mn(2+) site is built by Asp-194, Glu-220, and Asp-245. Catalysis depends on Glu-323, which acts as the Proton donor.

It belongs to the mandelate racemase/muconate lactonizing enzyme family. Requires Mn(2+) as cofactor.

It catalyses the reaction 2-[(2R)-2-chloro-2,5-dihydro-5-oxofuryl]acetate = 3-chloro-cis,cis-muconate + H(+). It functions in the pathway aromatic compound metabolism; 3-chlorocatechol degradation. The polypeptide is Chloromuconate cycloisomerase (tfdDI) (Cupriavidus pinatubonensis (strain JMP 134 / LMG 1197) (Cupriavidus necator (strain JMP 134))).